The primary structure comprises 441 residues: Double-stranded RNA-binding protein 1 (441 aa).

3 consecutive DRBM domains span residues 1–71, 86–155, and 169–237; these read MYKS…HLSS, SYKS…SLPQ, and SYKN…HFED. Residues 69–88 are disordered; the sequence is LSSLPLPPPPPPSENQSSYK.

In terms of biological role, binds double-stranded RNA. This is Double-stranded RNA-binding protein 1 (DRB1) from Oryza sativa subsp. japonica (Rice).